The chain runs to 425 residues: L-cysteine:1D-myo-inositol 2-amino-2-deoxy-alpha-D-glucopyranoside ligase (425 aa).

A Zn(2+)-binding site is contributed by Cys-43. L-cysteinyl-5'-AMP contacts are provided by residues 43 to 46 (CGIT), Thr-58, and 81 to 83 (NVT). Residues 45-55 (ITPYDATHIGH) carry the 'HIGH' region motif. A 'ERGGDP' region motif is present at residues 195-200 (ERGGDP). Trp-236 serves as a coordination point for L-cysteinyl-5'-AMP. Residue Cys-240 coordinates Zn(2+). 258–260 (GSD) contacts L-cysteinyl-5'-AMP. His-265 contacts Zn(2+). Val-295 is an L-cysteinyl-5'-AMP binding site. A 'KMSKS' region motif is present at residues 301 to 305 (KMSKS).

Belongs to the class-I aminoacyl-tRNA synthetase family. MshC subfamily. As to quaternary structure, monomer. Zn(2+) serves as cofactor.

The enzyme catalyses 1D-myo-inositol 2-amino-2-deoxy-alpha-D-glucopyranoside + L-cysteine + ATP = 1D-myo-inositol 2-(L-cysteinylamino)-2-deoxy-alpha-D-glucopyranoside + AMP + diphosphate + H(+). Functionally, catalyzes the ATP-dependent condensation of GlcN-Ins and L-cysteine to form L-Cys-GlcN-Ins. The sequence is that of L-cysteine:1D-myo-inositol 2-amino-2-deoxy-alpha-D-glucopyranoside ligase from Sanguibacter keddieii (strain ATCC 51767 / DSM 10542 / NCFB 3025 / ST-74).